The chain runs to 924 residues: Exocyst complex component 2 (924 aa).

In terms of domain architecture, IPT/TIG spans 8–93 (PLVTGISPNE…GTSTVSFKLL (86 aa)). Positions 240–260 (QKLENVLNRASNTADTLFQEV) form a coiled coil. Phosphoserine is present on residues serine 431, serine 432, and serine 435. At threonine 440 the chain carries Phosphothreonine. Lysine 454 carries the N6-acetyllysine modification.

Belongs to the SEC5 family. In terms of assembly, the exocyst complex is composed of EXOC1, EXOC2, EXOC3, EXOC4, EXOC5, EXOC6, EXOC7 and EXOC8. Interacts with EXOC3L1. Interacts with GNEFR/DELGEF; this interaction occurs only in the presence of magnesium or manganese and is stimulated by dCTP or GTP. Interacts with RALA and RALB. Interacts with ARL13B; regulates ARL13B localization to the cilium membrane.

Its subcellular location is the midbody. It localises to the midbody ring. In terms of biological role, component of the exocyst complex involved in the docking of exocytic vesicles with fusion sites on the plasma membrane. The polypeptide is Exocyst complex component 2 (Exoc2) (Mus musculus (Mouse)).